The primary structure comprises 363 residues: Peptide chain release factor 1 (363 aa).

An N5-methylglutamine modification is found at glutamine 237.

This sequence belongs to the prokaryotic/mitochondrial release factor family. Post-translationally, methylated by PrmC. Methylation increases the termination efficiency of RF1.

It localises to the cytoplasm. Functionally, peptide chain release factor 1 directs the termination of translation in response to the peptide chain termination codons UAG and UAA. This Mycoplasma capricolum subsp. capricolum (strain California kid / ATCC 27343 / NCTC 10154) protein is Peptide chain release factor 1 (prfA).